We begin with the raw amino-acid sequence, 417 residues long: MLEQMGIAAKQASYKLAQLSSREKNRVLEKIADELEAQSESILNANAQDVADACANGLSEAMLDRLALTPARLKGIADDVRQVCNLADPVGQVIDGGVLDSGLRLERRRVPLGVIGVIYEARPNVTVDVASLCLKTGNAVILRGGKETCRTNAATVAVIQDALKSCGLPAGAVQAIDNPDRALVSEMLRMDKYIDMLIPRGGAGLHKLCREQSTIPVITGGIGVCHIYVDESAEIAEALKVIVNAKTQRPSTCNTVETLLVNKNIADSFLPALSKQMAESGVTLHADAAALAQLQAGPAKVVAVKAEEYDDEFLSLDLNVKIVSDLDDAIAHIREHGTQHSDAILTRDMRNAQRFVNEVDSSAVYVNASTRFTDGGQFGLGAEVAVSTQKLHARGPMGLEALTTYKWIGIGDYTIRA.

It belongs to the gamma-glutamyl phosphate reductase family.

Its subcellular location is the cytoplasm. The enzyme catalyses L-glutamate 5-semialdehyde + phosphate + NADP(+) = L-glutamyl 5-phosphate + NADPH + H(+). The protein operates within amino-acid biosynthesis; L-proline biosynthesis; L-glutamate 5-semialdehyde from L-glutamate: step 2/2. Functionally, catalyzes the NADPH-dependent reduction of L-glutamate 5-phosphate into L-glutamate 5-semialdehyde and phosphate. The product spontaneously undergoes cyclization to form 1-pyrroline-5-carboxylate. The polypeptide is Gamma-glutamyl phosphate reductase (Escherichia coli O6:K15:H31 (strain 536 / UPEC)).